Consider the following 61-residue polypeptide: Small ribosomal subunit protein uS14 (61 aa).

Residues Cys-24, Cys-27, Cys-40, and Cys-43 each coordinate Zn(2+).

This sequence belongs to the universal ribosomal protein uS14 family. Zinc-binding uS14 subfamily. As to quaternary structure, part of the 30S ribosomal subunit. Contacts proteins S3 and S10. Requires Zn(2+) as cofactor.

In terms of biological role, binds 16S rRNA, required for the assembly of 30S particles and may also be responsible for determining the conformation of the 16S rRNA at the A site. The protein is Small ribosomal subunit protein uS14 of Dehalococcoides mccartyi (strain ATCC BAA-2266 / KCTC 15142 / 195) (Dehalococcoides ethenogenes (strain 195)).